The primary structure comprises 142 residues: Large ribosomal subunit protein uL13 (142 aa).

It belongs to the universal ribosomal protein uL13 family. Part of the 50S ribosomal subunit.

Its function is as follows. This protein is one of the early assembly proteins of the 50S ribosomal subunit, although it is not seen to bind rRNA by itself. It is important during the early stages of 50S assembly. In Bordetella avium (strain 197N), this protein is Large ribosomal subunit protein uL13.